A 487-amino-acid polypeptide reads, in one-letter code: Argininosuccinate lyase (487 aa).

The protein belongs to the lyase 1 family. Argininosuccinate lyase subfamily.

It is found in the cytoplasm. It carries out the reaction 2-(N(omega)-L-arginino)succinate = fumarate + L-arginine. It functions in the pathway amino-acid biosynthesis; L-arginine biosynthesis; L-arginine from L-ornithine and carbamoyl phosphate: step 3/3. The chain is Argininosuccinate lyase from Methanothrix thermoacetophila (strain DSM 6194 / JCM 14653 / NBRC 101360 / PT) (Methanosaeta thermophila).